Reading from the N-terminus, the 73-residue chain is Stigmurin (73 aa).

The signal sequence occupies residues 1 to 22; that stretch reads MQIKHLITLFFLVLIVADQCSA. K39 carries the lysine amide modification. Positions 45-73 are excised as a propeptide; sequence EISAQIEQYKDLQKREAELEKLLDRLPMY.

It belongs to the non-disulfide-bridged peptide (NDBP) superfamily. Short antimicrobial peptide (group 4) family. Expressed by the venom gland.

The protein resides in the secreted. Functionally, antimicrobial peptide with activity against Gram-positive bacterial strains (S.aureus (MIC=2-140 uM), methicillin-resistant S.aureus (MRSA) (MIC=8-17 uM), S.epidermidis (MIC=1.17 uM), and the yeasts C.albicans, C.krusei, and C.glabrata (MIC=34-69 uM)). Acts by disrupting the cell membrane (observed on outer layer of the S.aureus). Is not active against Gram-negative bacteria (E.coli, E.Cloacae, P.aeruginosa), and the Gram-positive bacterium E.faecalis. Also shows toxicity against several cell lines, but possess low hemolytic activity at the highest concentration tested. Also shows antiparasitic activity against Trypanosoma cruzi by decreasing the viability of the epimastigote and trypomastigote forms of the parasite. Displays high hydroxyl radical scavenging activity (antioxidant action). In a wound infection model, the topical application of this peptide demonstrates antibacterial effects, as well as an ability to accelerate wound closure speed, which suggests the induction of tissue repair. In the model of polymicrobial sepsis, it exhibits an antibiotic effect, reducing the levels of microorganisms in the infectious focus and the inflammatory responses in the lung and cecum of septic animals. The protein is Stigmurin of Tityus stigmurus (Brazilian scorpion).